Here is a 139-residue protein sequence, read N- to C-terminus: uncharacterized protein (139 aa).

Helical transmembrane passes span 35–55 (LVFLFVVFFSDCFFSITSFLI) and 57–77 (FGILSSFLIFSLFCLGFLTVI).

It is found in the membrane. This is an uncharacterized protein from Saccharomyces cerevisiae (strain ATCC 204508 / S288c) (Baker's yeast).